A 119-amino-acid polypeptide reads, in one-letter code: Basic phospholipase A2 DE-1 (119 aa).

Cystine bridges form between cysteine 11/cysteine 71, cysteine 26/cysteine 118, cysteine 28/cysteine 44, cysteine 43/cysteine 99, cysteine 50/cysteine 92, cysteine 60/cysteine 85, and cysteine 78/cysteine 90. Tyrosine 27, glycine 29, glycine 31, and aspartate 48 together coordinate Ca(2+). Aspartate 93 is an active-site residue.

This sequence belongs to the phospholipase A2 family. Group I subfamily. D49 sub-subfamily. Ca(2+) is required as a cofactor. Expressed by the venom gland.

It is found in the secreted. It carries out the reaction a 1,2-diacyl-sn-glycero-3-phosphocholine + H2O = a 1-acyl-sn-glycero-3-phosphocholine + a fatty acid + H(+). In terms of biological role, PLA2 catalyzes the calcium-dependent hydrolysis of the 2-acyl groups in 3-sn-phosphoglycerides. In Hemachatus haemachatus (Rinkhals), this protein is Basic phospholipase A2 DE-1.